Reading from the N-terminus, the 445-residue chain is Trigger factor (445 aa).

The region spanning 162–247 (GDQVTIDAIG…IKAVHTAEPT (86 aa)) is the PPIase FKBP-type domain.

It belongs to the FKBP-type PPIase family. Tig subfamily.

It localises to the cytoplasm. It carries out the reaction [protein]-peptidylproline (omega=180) = [protein]-peptidylproline (omega=0). In terms of biological role, involved in protein export. Acts as a chaperone by maintaining the newly synthesized protein in an open conformation. Functions as a peptidyl-prolyl cis-trans isomerase. This Rickettsia akari (strain Hartford) protein is Trigger factor.